The primary structure comprises 290 residues: Phosphoribosylaminoimidazole-succinocarboxamide synthase (290 aa).

It belongs to the SAICAR synthetase family.

It catalyses the reaction 5-amino-1-(5-phospho-D-ribosyl)imidazole-4-carboxylate + L-aspartate + ATP = (2S)-2-[5-amino-1-(5-phospho-beta-D-ribosyl)imidazole-4-carboxamido]succinate + ADP + phosphate + 2 H(+). It participates in purine metabolism; IMP biosynthesis via de novo pathway; 5-amino-1-(5-phospho-D-ribosyl)imidazole-4-carboxamide from 5-amino-1-(5-phospho-D-ribosyl)imidazole-4-carboxylate: step 1/2. The chain is Phosphoribosylaminoimidazole-succinocarboxamide synthase from Haemophilus influenzae (strain PittGG).